The following is a 345-amino-acid chain: Phosphoribosylformylglycinamidine cyclo-ligase (345 aa).

It belongs to the AIR synthase family.

The protein resides in the cytoplasm. It carries out the reaction 2-formamido-N(1)-(5-O-phospho-beta-D-ribosyl)acetamidine + ATP = 5-amino-1-(5-phospho-beta-D-ribosyl)imidazole + ADP + phosphate + H(+). It participates in purine metabolism; IMP biosynthesis via de novo pathway; 5-amino-1-(5-phospho-D-ribosyl)imidazole from N(2)-formyl-N(1)-(5-phospho-D-ribosyl)glycinamide: step 2/2. The protein is Phosphoribosylformylglycinamidine cyclo-ligase of Anaeromyxobacter dehalogenans (strain 2CP-1 / ATCC BAA-258).